The primary structure comprises 465 residues: ATP synthase subunit beta (465 aa).

153 to 160 (GGAGVGKT) lines the ATP pocket.

The protein belongs to the ATPase alpha/beta chains family. F-type ATPases have 2 components, CF(1) - the catalytic core - and CF(0) - the membrane proton channel. CF(1) has five subunits: alpha(3), beta(3), gamma(1), delta(1), epsilon(1). CF(0) has three main subunits: a(1), b(2) and c(9-12). The alpha and beta chains form an alternating ring which encloses part of the gamma chain. CF(1) is attached to CF(0) by a central stalk formed by the gamma and epsilon chains, while a peripheral stalk is formed by the delta and b chains.

It is found in the cell membrane. The enzyme catalyses ATP + H2O + 4 H(+)(in) = ADP + phosphate + 5 H(+)(out). In terms of biological role, produces ATP from ADP in the presence of a proton gradient across the membrane. The catalytic sites are hosted primarily by the beta subunits. The protein is ATP synthase subunit beta of Clostridium perfringens (strain SM101 / Type A).